Here is a 352-residue protein sequence, read N- to C-terminus: Protein RecA (352 aa).

65–72 (GPESSGKT) serves as a coordination point for ATP.

Belongs to the RecA family.

The protein resides in the cytoplasm. Can catalyze the hydrolysis of ATP in the presence of single-stranded DNA, the ATP-dependent uptake of single-stranded DNA by duplex DNA, and the ATP-dependent hybridization of homologous single-stranded DNAs. It interacts with LexA causing its activation and leading to its autocatalytic cleavage. The sequence is that of Protein RecA from Pseudomonas fluorescens (strain SBW25).